Consider the following 279-residue polypeptide: Homeobox protein BarH-like 2 (279 aa).

Disordered stretches follow at residues 110–137 (APGG…RRSR) and 194–279 (KGGQ…PPLS). Polar residues predominate over residues 118-128 (SSESETEQPTP). Residues 133 to 192 (PRRSRTIFTELQLMGLEKKFQKQKYLSTPDRLDLAQSLGLTQLQVKTWYQNRRMKWKKMV) constitute a DNA-binding region (homeobox). The span at 225 to 240 (NSQAQGQEQLEPSQGQ) shows a compositional bias: polar residues. The segment covering 261–279 (PPDPPQELPIPSSEPPPLS) has biased composition (pro residues).

It belongs to the BAR homeobox family. As to expression, highly expressed in adult salivary gland and at much lower levels in mammary gland, kidney and placenta.

The protein localises to the nucleus. In terms of biological role, transcription factor. Binds optimally to the DNA consensus sequence 5'-YYTAATGRTTTTY-3'. May control the expression of neural adhesion molecules such as L1 or Ng-CAM during embryonic development of both the central and peripherical nervous system. May be involved in controlling adhesive processes in keratinizing epithelia. This chain is Homeobox protein BarH-like 2 (BARX2), found in Homo sapiens (Human).